The following is a 217-amino-acid chain: Protein TNT (217 aa).

Residues 1 to 217 (MSLVPGQHCS…HSTKQTGGKE (217 aa)) form a disordered region. Polar residues-rich tracts occupy residues 20–36 (SPIT…TEFS) and 45–61 (TSPQ…SQGP). Low complexity-rich tracts occupy residues 91–104 (EPSL…LQSP) and 128–139 (QSSESHVSSVQH). Polar residues-rich tracts occupy residues 177–191 (RLNT…SQLG) and 207–217 (AHSTKQTGGKE).

As to expression, preferentially expressed in teratocarcinoma rather than in normal testis.

In Homo sapiens (Human), this protein is Protein TNT (C16orf82).